A 74-amino-acid chain; its full sequence is ATP synthase F(1) complex subunit epsilon, mitochondrial (74 aa).

Belongs to the eukaryotic ATPase epsilon family. Component of the ATP synthase complex composed at least of ATP5F1A/subunit alpha, ATP5F1B/subunit beta, ATP5MC1/subunit c (homooctomer), MT-ATP6/subunit a, MT-ATP8/subunit 8, ATP5ME/subunit e, ATP5MF/subunit f, ATP5MG/subunit g, ATP5MK/subunit k, ATP5MJ/subunit j, ATP5F1C/subunit gamma, ATP5F1D/subunit delta, ATP5F1E/subunit epsilon, ATP5PF/subunit F6, ATP5PB/subunit b, ATP5PD/subunit d, ATP5PO/subunit OSCP. ATP synthase complex consists of a soluble F(1) head domain (subunits alpha(3) and beta(3)) - the catalytic core - and a membrane F(0) domain - the membrane proton channel (subunits c, a, 8, e, f, g, k and j). These two domains are linked by a central stalk (subunits gamma, delta, and epsilon) rotating inside the F1 region and a stationary peripheral stalk (subunits F6, b, d, and OSCP).

The protein resides in the mitochondrion. Its subcellular location is the mitochondrion inner membrane. Functionally, subunit epsilon, of the mitochondrial membrane ATP synthase complex (F(1)F(0) ATP synthase or Complex V) that produces ATP from ADP in the presence of a proton gradient across the membrane which is generated by electron transport complexes of the respiratory chain. ATP synthase complex consist of a soluble F(1) head domain - the catalytic core - and a membrane F(1) domain - the membrane proton channel. These two domains are linked by a central stalk rotating inside the F(1) region and a stationary peripheral stalk. During catalysis, ATP synthesis in the catalytic domain of F(1) is coupled via a rotary mechanism of the central stalk subunits to proton translocation. In vivo, can only synthesize ATP although its ATP hydrolase activity can be activated artificially in vitro. May be essential for the assembly of F(1) and may play an important role in the incorporation of the hydrophobic subunit c into the F(1)-c oligomer rotor of the mitochondrial ATP synthase complex. This is ATP synthase F(1) complex subunit epsilon, mitochondrial from Dictyostelium discoideum (Social amoeba).